A 261-amino-acid chain; its full sequence is Indole-3-glycerol phosphate synthase (261 aa).

Belongs to the TrpC family.

The catalysed reaction is 1-(2-carboxyphenylamino)-1-deoxy-D-ribulose 5-phosphate + H(+) = (1S,2R)-1-C-(indol-3-yl)glycerol 3-phosphate + CO2 + H2O. It participates in amino-acid biosynthesis; L-tryptophan biosynthesis; L-tryptophan from chorismate: step 4/5. The sequence is that of Indole-3-glycerol phosphate synthase from Burkholderia cenocepacia (strain HI2424).